Here is a 539-residue protein sequence, read N- to C-terminus: Phosphoenolpyruvate carboxykinase (ATP) (539 aa).

Substrate is bound by residues Arg61, Tyr195, and Lys201. ATP-binding positions include Lys201, His220, and Gly238 to Thr246. Mn(2+) is bound by residues Lys201 and His220. Residue Asp259 participates in Mn(2+) binding. 3 residues coordinate ATP: Glu287, Arg325, and Thr450. Arg325 is a binding site for substrate.

It belongs to the phosphoenolpyruvate carboxykinase (ATP) family. The cofactor is Mn(2+).

It localises to the cytoplasm. It catalyses the reaction oxaloacetate + ATP = phosphoenolpyruvate + ADP + CO2. Its pathway is carbohydrate biosynthesis; gluconeogenesis. Functionally, involved in the gluconeogenesis. Catalyzes the conversion of oxaloacetate (OAA) to phosphoenolpyruvate (PEP) through direct phosphoryl transfer between the nucleoside triphosphate and OAA. In Methylorubrum populi (strain ATCC BAA-705 / NCIMB 13946 / BJ001) (Methylobacterium populi), this protein is Phosphoenolpyruvate carboxykinase (ATP).